The chain runs to 346 residues: tRNA N6-adenosine threonylcarbamoyltransferase (346 aa).

Residues His-111 and His-115 each contribute to the Fe cation site. Substrate contacts are provided by residues 134 to 138 (LVSGG), Asp-167, Gly-180, and Asn-279. Residue Asp-307 participates in Fe cation binding.

This sequence belongs to the KAE1 / TsaD family. It depends on Fe(2+) as a cofactor.

It is found in the cytoplasm. The catalysed reaction is L-threonylcarbamoyladenylate + adenosine(37) in tRNA = N(6)-L-threonylcarbamoyladenosine(37) in tRNA + AMP + H(+). Required for the formation of a threonylcarbamoyl group on adenosine at position 37 (t(6)A37) in tRNAs that read codons beginning with adenine. Is involved in the transfer of the threonylcarbamoyl moiety of threonylcarbamoyl-AMP (TC-AMP) to the N6 group of A37, together with TsaE and TsaB. TsaD likely plays a direct catalytic role in this reaction. In Burkholderia thailandensis (strain ATCC 700388 / DSM 13276 / CCUG 48851 / CIP 106301 / E264), this protein is tRNA N6-adenosine threonylcarbamoyltransferase.